Consider the following 415-residue polypeptide: Fructose-like permease IIC component 1 (415 aa).

Over M1–M46 the chain is Cytoplasmic. The PTS EIIC type-2 domain occupies L35–L410. The helical transmembrane segment at V47–W67 threads the bilayer. Topologically, residues L68 to S101 are periplasmic. A helical transmembrane segment spans residues F102–I122. At G123 to L126 the chain is on the cytoplasmic side. The chain crosses the membrane as a helical span at residues A127 to F147. The Periplasmic portion of the chain corresponds to D148–S157. Residues S158 to V178 form a helical membrane-spanning segment. Residues K179–T197 lie on the Cytoplasmic side of the membrane. Residues F198–P218 form a helical membrane-spanning segment. Residues F219 to K237 are Periplasmic-facing. The chain crosses the membrane as a helical span at residues G238 to I258. Over N259–P276 the chain is Cytoplasmic. Residues V277–I297 traverse the membrane as a helical segment. Over D298–A318 the chain is Periplasmic. The helical transmembrane segment at M319–I339 threads the bilayer. Over T340–A341 the chain is Cytoplasmic. Residues I342–V362 form a helical membrane-spanning segment. Residues Q363–N378 lie on the Periplasmic side of the membrane. A helical transmembrane segment spans residues L379 to F399. At L400–L415 the chain is on the cytoplasmic side.

It is found in the cell inner membrane. Its function is as follows. The phosphoenolpyruvate-dependent sugar phosphotransferase system (PTS), a major carbohydrate active -transport system, catalyzes the phosphorylation of incoming sugar substrates concomitant with their translocation across the cell membrane. The chain is Fructose-like permease IIC component 1 (fryC) from Escherichia coli (strain K12).